A 349-amino-acid polypeptide reads, in one-letter code: MAEISLRDVRKSYAGIEVIHGVDFEIADGEFVVIVGPSGCGKSTLLRMVAGLEEITAGEIAIGGRVVNRLEPRERDIAMVFQNYALYPHMTVRENMAYGLRIAKLSKAEIEERVARSATMLELGQLLDRKPRQLSGGQRQRVAMGRALVRNPAAFLLDEPLSNLDAKLRVQMRLQIKELQRTVRTTSIYVTHDQVEAMTLADRLVVMNAGVAEQIATPAEIYDRPATTFVAGFIGSPAMNMLPARGLGDALEVAGQRLAVPAPAGRDLILGVRPEHLHAAGPEEPGFELHVQAVEWLGADAFAHGRLADGTELVLRTPGKAPVRERDRLKVAPDAAALHLFDAETGRRL.

The region spanning 4–234 is the ABC transporter domain; it reads ISLRDVRKSY…PATTFVAGFI (231 aa). ATP is bound at residue 36-43; the sequence is GPSGCGKS.

This sequence belongs to the ABC transporter superfamily. sn-glycerol-3-phosphate importer (TC 3.A.1.1.3) family. The complex is composed of two ATP-binding proteins (UgpC), two transmembrane proteins (UgpA and UgpE) and a solute-binding protein (UgpB).

Its subcellular location is the cell inner membrane. The enzyme catalyses sn-glycerol 3-phosphate(out) + ATP + H2O = sn-glycerol 3-phosphate(in) + ADP + phosphate + H(+). Its function is as follows. Part of the ABC transporter complex UgpBAEC involved in sn-glycerol-3-phosphate (G3P) import. Responsible for energy coupling to the transport system. In Cereibacter sphaeroides (strain ATCC 17023 / DSM 158 / JCM 6121 / CCUG 31486 / LMG 2827 / NBRC 12203 / NCIMB 8253 / ATH 2.4.1.) (Rhodobacter sphaeroides), this protein is sn-glycerol-3-phosphate import ATP-binding protein UgpC.